The sequence spans 71 residues: Delta-actitoxin-Avd2b 2 (71 aa).

The signal sequence occupies residues 1–20 (MNRLLVFLMLGAAFMLVVSA). Positions 21–41 (NDAYGDEPAFKDLNQGDESLG) are excised as a propeptide. 3 disulfide bridges follow: Cys-46-Cys-61, Cys-47-Cys-55, and Cys-49-Cys-66.

It belongs to the sea anemone short toxin (type III) family.

Its subcellular location is the secreted. It localises to the nematocyst. In terms of biological role, voltage-gated sodium channel (Nav) inhibitor. 1 uM completely inhibits insect voltage-gated sodium channel inactivation (DmNav1 from D.melanogaster). This Anemonia viridis (Snakelocks anemone) protein is Delta-actitoxin-Avd2b 2.